A 496-amino-acid chain; its full sequence is Glutamyl-tRNA(Gln) amidotransferase subunit A (496 aa).

Active-site charge relay system residues include Lys75 and Ser150. Ser174 acts as the Acyl-ester intermediate in catalysis.

The protein belongs to the amidase family. GatA subfamily. In terms of assembly, heterotrimer of A, B and C subunits.

The enzyme catalyses L-glutamyl-tRNA(Gln) + L-glutamine + ATP + H2O = L-glutaminyl-tRNA(Gln) + L-glutamate + ADP + phosphate + H(+). In terms of biological role, allows the formation of correctly charged Gln-tRNA(Gln) through the transamidation of misacylated Glu-tRNA(Gln) in organisms which lack glutaminyl-tRNA synthetase. The reaction takes place in the presence of glutamine and ATP through an activated gamma-phospho-Glu-tRNA(Gln). This is Glutamyl-tRNA(Gln) amidotransferase subunit A from Burkholderia vietnamiensis (strain G4 / LMG 22486) (Burkholderia cepacia (strain R1808)).